The sequence spans 217 residues: MTLARLAPLAALLLAACAQFQPPPPEPDPLPDLMRQQTSLPQGGGVFTAGGSLSLTSDNRAFRPGDVLTVVLEETTQASKQAGTSFGKKSGAKIGPSLIGNTTFNAQVGIDANRDFNGSSSSTQQNALAGSLTVVVHRVLPNGLLQVKGEKQLTLNQGEEMLRVAGYVRVEDIDTDNRVSSLRIANARIGYSGSGALADANSPGWLMRFFASPLMPF.

An N-terminal signal peptide occupies residues 1-16 (MTLARLAPLAALLLAA). Cys-17 carries the N-palmitoyl cysteine lipid modification. The S-diacylglycerol cysteine moiety is linked to residue Cys-17.

This sequence belongs to the FlgH family. The basal body constitutes a major portion of the flagellar organelle and consists of four rings (L,P,S, and M) mounted on a central rod.

The protein resides in the cell outer membrane. The protein localises to the bacterial flagellum basal body. In terms of biological role, assembles around the rod to form the L-ring and probably protects the motor/basal body from shearing forces during rotation. The polypeptide is Flagellar L-ring protein 1 (Chromobacterium violaceum (strain ATCC 12472 / DSM 30191 / JCM 1249 / CCUG 213 / NBRC 12614 / NCIMB 9131 / NCTC 9757 / MK)).